We begin with the raw amino-acid sequence, 254 residues long: Precorrin-3B C(17)-methyltransferase (254 aa).

This sequence belongs to the precorrin methyltransferase family.

The enzyme catalyses precorrin-3B + S-adenosyl-L-methionine = precorrin-4 + S-adenosyl-L-homocysteine + 3 H(+). It participates in cofactor biosynthesis; adenosylcobalamin biosynthesis; cob(II)yrinate a,c-diamide from precorrin-2 (aerobic route): step 3/10. In terms of biological role, methyltransferase that catalyzes the methylation of C-17 in precorrin-3B to form precorrin-4. In Sinorhizobium sp, this protein is Precorrin-3B C(17)-methyltransferase (cobJ).